Here is a 207-residue protein sequence, read N- to C-terminus: Nudix hydrolase 4 (207 aa).

The Nudix hydrolase domain maps to 58–194 (GYRQVVGCVP…WMREALEAFI (137 aa)). Residues 101 to 122 (GGWETDESMEEAALRETIEEAG) carry the Nudix box motif. Mg(2+) contacts are provided by E116 and E120.

Belongs to the Nudix hydrolase family. Requires Mg(2+) as cofactor. Mn(2+) is required as a cofactor. As to expression, expressed in roots, stems and leaves.

The catalysed reaction is ADP-D-ribose + H2O = D-ribose 5-phosphate + AMP + 2 H(+). It carries out the reaction NAD(+) + H2O = beta-nicotinamide D-ribonucleotide + AMP + 2 H(+). The enzyme catalyses NADH + H2O = reduced beta-nicotinamide D-ribonucleotide + AMP + 2 H(+). Functionally, probably mediates the hydrolysis of some nucleoside diphosphate derivatives. In vitro, it can use both NADH and ADP-ribose as substrates; however the relevance of such substrates in vivo is unclear. This is Nudix hydrolase 4 (NUDT4) from Arabidopsis thaliana (Mouse-ear cress).